The following is a 368-amino-acid chain: Zinc finger protein 24 (368 aa).

Residue Lys-22 forms a Glycyl lysine isopeptide (Lys-Gly) (interchain with G-Cter in SUMO2) linkage. A Glycyl lysine isopeptide (Lys-Gly) (interchain with G-Cter in SUMO1); alternate cross-link involves residue Lys-27. Lys-27 is covalently cross-linked (Glycyl lysine isopeptide (Lys-Gly) (interchain with G-Cter in SUMO2); alternate). In terms of domain architecture, SCAN box spans 52–134; the sequence is RQRFRQFGYQ…TVLEDLESEL (83 aa). Ser-132 and Ser-142 each carry phosphoserine. Glycyl lysine isopeptide (Lys-Gly) (interchain with G-Cter in SUMO2) cross-links involve residues Lys-147, Lys-177, and Lys-236. The C2H2-type 1 zinc-finger motif lies at 251–273; the sequence is HICDECGKHFSQGSALILHQRIH. The segment at 251–301 is necessary and sufficient for nuclear localization; sequence HICDECGKHFSQGSALILHQRIHSGEKPYGCVECGKAFSRSSILVQHQRVH. Ser-274 is modified (phosphoserine). Residues Lys-277 and Lys-286 each participate in a glycyl lysine isopeptide (Lys-Gly) (interchain with G-Cter in SUMO2) cross-link. 3 C2H2-type zinc fingers span residues 279–301, 307–329, and 335–357; these read YGCV…QRVH, YKCL…QRIH, and YECV…QRRH. The residue at position 292 (Ser-292) is a Phosphoserine. Tyr-335 bears the Phosphotyrosine mark. Glycyl lysine isopeptide (Lys-Gly) (interchain with G-Cter in SUMO2) cross-links involve residues Lys-361 and Lys-367.

It belongs to the krueppel C2H2-type zinc-finger protein family. In terms of processing, sumoylated.

Its subcellular location is the nucleus. In terms of biological role, transcription factor required for myelination of differentiated oligodendrocytes. Required for the conversion of oligodendrocytes from the premyelinating to the myelinating state. In the developing central nervous system (CNS), involved in the maintenance in the progenitor stage by promoting the cell cycle. Specifically binds to the 5'-TCAT-3' DNA sequence. Has transcription repressor activity in vitro. This Pongo abelii (Sumatran orangutan) protein is Zinc finger protein 24 (ZNF24).